The primary structure comprises 1060 residues: Carbamoyl phosphate synthase large chain (1060 aa).

Residues 1–401 are carboxyphosphate synthetic domain; it reads MPKRTDIRKI…SLLKAVRSLE (401 aa). Residues Arg-129, Arg-169, Gly-175, Gly-176, Gln-208, Ile-210, Glu-215, Gly-241, Ile-242, His-243, Gln-284, and Glu-298 each coordinate ATP. The 195-residue stretch at 133-327 folds into the ATP-grasp 1 domain; sequence KNLMNQLNEP…IAKMAAKIAV (195 aa). Mg(2+)-binding residues include Gln-284, Glu-298, and Asn-300. Residues Gln-284, Glu-298, and Asn-300 each contribute to the Mn(2+) site. An oligomerization domain region spans residues 402 to 546; the sequence is IGTAHLELDG…YTTYEQENES (145 aa). Positions 547–929 are carbamoyl phosphate synthetic domain; sequence LVSAKPSILV…ALYKAFEASG (383 aa). An ATP-grasp 2 domain is found at 671-861; sequence DQLIQELNIP…MAQLATQLIL (191 aa). Residues Arg-707, Arg-746, Leu-748, Glu-752, Gly-777, Val-778, His-779, Ser-780, Gln-820, and Glu-832 each coordinate ATP. 3 residues coordinate Mg(2+): Gln-820, Glu-832, and Asn-834. Mn(2+) is bound by residues Gln-820, Glu-832, and Asn-834. Positions 930 to 1060 constitute an MGS-like domain; sequence MHLPSHGNVL…ESQSLLTKPL (131 aa). Positions 930 to 1060 are allosteric domain; the sequence is MHLPSHGNVL…ESQSLLTKPL (131 aa).

It belongs to the CarB family. As to quaternary structure, composed of two chains; the small (or glutamine) chain promotes the hydrolysis of glutamine to ammonia, which is used by the large (or ammonia) chain to synthesize carbamoyl phosphate. Tetramer of heterodimers (alpha,beta)4. Mg(2+) serves as cofactor. Mn(2+) is required as a cofactor.

It carries out the reaction hydrogencarbonate + L-glutamine + 2 ATP + H2O = carbamoyl phosphate + L-glutamate + 2 ADP + phosphate + 2 H(+). It catalyses the reaction hydrogencarbonate + NH4(+) + 2 ATP = carbamoyl phosphate + 2 ADP + phosphate + 2 H(+). Its pathway is amino-acid biosynthesis; L-arginine biosynthesis; carbamoyl phosphate from bicarbonate: step 1/1. The protein operates within pyrimidine metabolism; UMP biosynthesis via de novo pathway; (S)-dihydroorotate from bicarbonate: step 1/3. Large subunit of the glutamine-dependent carbamoyl phosphate synthetase (CPSase). CPSase catalyzes the formation of carbamoyl phosphate from the ammonia moiety of glutamine, carbonate, and phosphate donated by ATP, constituting the first step of 2 biosynthetic pathways, one leading to arginine and/or urea and the other to pyrimidine nucleotides. The large subunit (synthetase) binds the substrates ammonia (free or transferred from glutamine from the small subunit), hydrogencarbonate and ATP and carries out an ATP-coupled ligase reaction, activating hydrogencarbonate by forming carboxy phosphate which reacts with ammonia to form carbamoyl phosphate. The protein is Carbamoyl phosphate synthase large chain of Latilactobacillus sakei subsp. sakei (strain 23K) (Lactobacillus sakei subsp. sakei).